A 207-amino-acid chain; its full sequence is Glycerol-3-phosphate acyltransferase (207 aa).

The next 6 helical transmembrane spans lie at 1–21, 42–62, 65–85, 105–125, 138–158, and 159–179; these read MIII…GKYF, ILGV…GTLA, IPII…FAII, AGVL…IFLL, ITVA…GFIL, and TDYD…IIIR.

The protein belongs to the PlsY family. As to quaternary structure, probably interacts with PlsX.

The protein localises to the cell membrane. The catalysed reaction is an acyl phosphate + sn-glycerol 3-phosphate = a 1-acyl-sn-glycero-3-phosphate + phosphate. The protein operates within lipid metabolism; phospholipid metabolism. Catalyzes the transfer of an acyl group from acyl-phosphate (acyl-PO(4)) to glycerol-3-phosphate (G3P) to form lysophosphatidic acid (LPA). This enzyme utilizes acyl-phosphate as fatty acyl donor, but not acyl-CoA or acyl-ACP. This is Glycerol-3-phosphate acyltransferase from Streptococcus agalactiae serotype Ia (strain ATCC 27591 / A909 / CDC SS700).